We begin with the raw amino-acid sequence, 141 residues long: Ribonuclease P protein component (141 aa).

Disordered regions lie at residues 37–56 (RTEE…VGFT) and 114–141 (RRIT…VNGK). Positions 114–123 (RRITAKGERR) are enriched in basic and acidic residues.

Belongs to the RnpA family. Consists of a catalytic RNA component (M1 or rnpB) and a protein subunit.

The catalysed reaction is Endonucleolytic cleavage of RNA, removing 5'-extranucleotides from tRNA precursor.. Its function is as follows. RNaseP catalyzes the removal of the 5'-leader sequence from pre-tRNA to produce the mature 5'-terminus. It can also cleave other RNA substrates such as 4.5S RNA. The protein component plays an auxiliary but essential role in vivo by binding to the 5'-leader sequence and broadening the substrate specificity of the ribozyme. The sequence is that of Ribonuclease P protein component from Brucella suis biovar 1 (strain 1330).